The chain runs to 874 residues: Alanine--tRNA ligase (874 aa).

Zn(2+) contacts are provided by H562, H566, C664, and H668.

It belongs to the class-II aminoacyl-tRNA synthetase family. Zn(2+) is required as a cofactor.

The protein localises to the cytoplasm. The catalysed reaction is tRNA(Ala) + L-alanine + ATP = L-alanyl-tRNA(Ala) + AMP + diphosphate. In terms of biological role, catalyzes the attachment of alanine to tRNA(Ala) in a two-step reaction: alanine is first activated by ATP to form Ala-AMP and then transferred to the acceptor end of tRNA(Ala). Also edits incorrectly charged Ser-tRNA(Ala) and Gly-tRNA(Ala) via its editing domain. In Shewanella halifaxensis (strain HAW-EB4), this protein is Alanine--tRNA ligase.